The chain runs to 238 residues: Tyrosine recombinase XerD-like (238 aa).

One can recognise a Core-binding (CB) domain in the interval 1 to 75 (MKLPNEIDEY…SANQYLLFLY (75 aa)). Positions 90–238 (VQKKSQTAQS…TITTLEKYYR (149 aa)) constitute a Tyr recombinase domain. Residues lysine 154 and arginine 204 contribute to the active site. Catalysis depends on tyrosine 236, which acts as the O-(3'-phospho-DNA)-tyrosine intermediate.

Belongs to the 'phage' integrase family. XerD-like subfamily.

It localises to the cytoplasm. Putative tyrosine recombinase. Not involved in the cutting and rejoining of the recombining DNA molecules on dif(SL) site. This is Tyrosine recombinase XerD-like (ynbA) from Lactococcus lactis subsp. lactis (strain IL1403) (Streptococcus lactis).